The following is a 281-amino-acid chain: Probable endonuclease 4 (281 aa).

Zn(2+) is bound by residues His-69, His-109, Glu-145, Asp-179, His-182, His-216, Asp-229, His-231, and Glu-261.

It belongs to the AP endonuclease 2 family. The cofactor is Zn(2+).

It catalyses the reaction Endonucleolytic cleavage to 5'-phosphooligonucleotide end-products.. Its function is as follows. Endonuclease IV plays a role in DNA repair. It cleaves phosphodiester bonds at apurinic or apyrimidinic (AP) sites, generating a 3'-hydroxyl group and a 5'-terminal sugar phosphate. In Aeromonas hydrophila subsp. hydrophila (strain ATCC 7966 / DSM 30187 / BCRC 13018 / CCUG 14551 / JCM 1027 / KCTC 2358 / NCIMB 9240 / NCTC 8049), this protein is Probable endonuclease 4.